Reading from the N-terminus, the 416-residue chain is Tryptophan synthase beta chain (416 aa).

The residue at position 109 (K109) is an N6-(pyridoxal phosphate)lysine.

The protein belongs to the TrpB family. In terms of assembly, tetramer of two alpha and two beta chains. Requires pyridoxal 5'-phosphate as cofactor.

It catalyses the reaction (1S,2R)-1-C-(indol-3-yl)glycerol 3-phosphate + L-serine = D-glyceraldehyde 3-phosphate + L-tryptophan + H2O. It participates in amino-acid biosynthesis; L-tryptophan biosynthesis; L-tryptophan from chorismate: step 5/5. In terms of biological role, the beta subunit is responsible for the synthesis of L-tryptophan from indole and L-serine. This is Tryptophan synthase beta chain from Synechococcus sp. (strain WH7803).